The chain runs to 287 residues: Small ribosomal subunit biogenesis GTPase RsgA (287 aa).

The 161-residue stretch at 63 to 223 folds into the CP-type G domain; sequence KNLLIRPKVA…VIDTPGFGSL (161 aa). Residues 113-116 and 166-174 each bind GTP; these read SKMD and GQSGVGKST. Residues Cys-246, Cys-251, His-253, and Cys-259 each contribute to the Zn(2+) site.

It belongs to the TRAFAC class YlqF/YawG GTPase family. RsgA subfamily. As to quaternary structure, monomer. Associates with 30S ribosomal subunit, binds 16S rRNA. Zn(2+) serves as cofactor.

Its subcellular location is the cytoplasm. In terms of biological role, one of several proteins that assist in the late maturation steps of the functional core of the 30S ribosomal subunit. Helps release RbfA from mature subunits. May play a role in the assembly of ribosomal proteins into the subunit. Circularly permuted GTPase that catalyzes slow GTP hydrolysis, GTPase activity is stimulated by the 30S ribosomal subunit. This chain is Small ribosomal subunit biogenesis GTPase RsgA, found in Malacoplasma penetrans (strain HF-2) (Mycoplasma penetrans).